The chain runs to 443 residues: Xaa-Pro dipeptidase (443 aa).

Residues aspartate 246, aspartate 257, histidine 339, glutamate 384, and glutamate 423 each coordinate Mn(2+).

It belongs to the peptidase M24B family. Bacterial-type prolidase subfamily. The cofactor is Mn(2+).

The enzyme catalyses Xaa-L-Pro dipeptide + H2O = an L-alpha-amino acid + L-proline. Functionally, splits dipeptides with a prolyl residue in the C-terminal position. The protein is Xaa-Pro dipeptidase of Pectobacterium carotovorum subsp. carotovorum (strain PC1).